The sequence spans 208 residues: ATP phosphoribosyltransferase (208 aa).

It belongs to the ATP phosphoribosyltransferase family. Short subfamily. In terms of assembly, heteromultimer composed of HisG and HisZ subunits.

The protein resides in the cytoplasm. The enzyme catalyses 1-(5-phospho-beta-D-ribosyl)-ATP + diphosphate = 5-phospho-alpha-D-ribose 1-diphosphate + ATP. Its pathway is amino-acid biosynthesis; L-histidine biosynthesis; L-histidine from 5-phospho-alpha-D-ribose 1-diphosphate: step 1/9. Functionally, catalyzes the condensation of ATP and 5-phosphoribose 1-diphosphate to form N'-(5'-phosphoribosyl)-ATP (PR-ATP). Has a crucial role in the pathway because the rate of histidine biosynthesis seems to be controlled primarily by regulation of HisG enzymatic activity. The chain is ATP phosphoribosyltransferase from Thermotoga petrophila (strain ATCC BAA-488 / DSM 13995 / JCM 10881 / RKU-1).